A 549-amino-acid chain; its full sequence is MSSVLKAFERFTIEQELQDRGEEGSIPPETLKSAVKVFVINTPNPTTRYHMLNFCLRIICSQNARASHRVGALITLFSLPSAGMQNHIRLADRSPEAQIERCEIDGFEPGTYRLIPNARANLTANEIAAYALLADDLPPTINNGTPYVHADVEGQPCDEIEQFLDRCYSVLIQAWVMVCKCMTAYDQPAGSADRRFAKYQQQGRLEARYMLQPEAQRLIQTAIRKSLVVRQYLTFELQLARRQGLLSNRYYAMVGDIGKYIENSGLTAFFLTLKYALGTKWSPLSLAAFTGELTKLRSLMMLYRDLGEQARYLALLEAPQIMDFAPGGYPLIFSYAMGVGTVLDVQMRNYTYARPFLNGYYFQIGVETARRQQGTVDNRVADDLGLTPEQRTEVTQLIDRLARGRGAGIPGGPVNPFVPPVQQQQPAAAYEDIPALEESDDDGDEDGGAGFQNGAQAPAARQGGQNDFRVQPLQDPIQAQLFMPLYPQVSNIPNHQNHQINRIGGMEHQDLLRYNENGDSQQDARGEHGNTFPNNPNQNAQSQVGDWDE.

Positions 1-398 are p protein-binding; the sequence is MSSVLKAFER…EQRTEVTQLI (398 aa). The ncore stretch occupies residues 1 to 404; the sequence is MSSVLKAFER…TQLIDRLARG (404 aa). RNA-binding residues include Lys180, Arg195, Tyr260, Tyr350, and Arg354. Ntail stretches follow at residues 401–549 and 405–549; these read LARG…DWDE and RGAG…DWDE. 3 disordered regions span residues 409–428, 437–467, and 517–549; these read IPGG…QPAA, EESD…GQND, and NGDS…DWDE. Low complexity predominate over residues 412–428; it reads GPVNPFVPPVQQQQPAA. Over residues 437-447 the composition is skewed to acidic residues; it reads EESDDDGDEDG. Ser439 is subject to Phosphoserine. Low complexity predominate over residues 452-465; the sequence is QNGAQAPAARQGGQ. Residues 531–549 are compositionally biased toward polar residues; it reads TFPNNPNQNAQSQVGDWDE.

Belongs to the paramyxoviruses nucleocapsid family. In terms of assembly, homomultimer; forms the nucleocapsid. Binds to the viral genomic RNA. N0 interacts with the phosphoprotein (via N-terminus); this interaction allows P to chaperon N0 to avoid N polymerization before encapsidation. Interacts (via N-terminus) as N-RNA template with the phosphoprotein (via C-terminus); this interaction positions the polymerase on the template.

The protein localises to the virion. The protein resides in the host cytoplasm. Forms the helical nucleocapsid (NC) with 12.71 N subunits per helical turn and a rise of 5.3 Angstrom per N subunit, protecting the genome from nucleases. The encapsidated genomic RNA serves as template for transcription and replication; encapsidation by N is coupled to RNA synthesis. Forms the encapsidation complex with the phosphoprotein protein P. Before encapsidation, the newly synthesized free N protein, so-called N0, is chaperoned by P. The protein is Nucleoprotein (N) of Mumps virus genotype B (strain Miyahara vaccine) (MuV).